A 589-amino-acid polypeptide reads, in one-letter code: Ubiquilin-1 (589 aa).

Residues 1–11 (MAESGESGGPP) show a composition bias toward gly residues. Disordered regions lie at residues 1–35 (MAES…AEPK) and 110–145 (NRPQ…ATSN). Ala2 is modified (N-acetylalanine). Residues 12–35 (GSQDSAAGAEGAGAPAAAASAEPK) are compositionally biased toward low complexity. A Ubiquitin-like domain is found at 37–111 (MKVTVKTPKE…VHLVIKTQNR (75 aa)). The segment covering 110 to 124 (NRPQDHSAQQTNTAG) has biased composition (polar residues). A compositionally biased stretch (low complexity) spans 125-145 (SNVTTSSTPNSNSTSGSATSN). Residues 178–428 (QLLSNPEMMV…LNNPLFAGNP (251 aa)) form an interaction with UBXN4 region. STI1 domains are found at residues 182–210 (NPEM…QLIM) and 212–251 (NPQM…MQEM). Residues 295–371 (PFASLVSNTS…NLVPGVGASM (77 aa)) are disordered. Polar residues predominate over residues 299–313 (LVSNTSSGEGSQPSR). Residues 327 to 360 (QTSQSSSASSGTASTVGGTTGSTASGTSGQSTTA) are compositionally biased toward low complexity. STI1 domains lie at 387 to 434 (NPQL…QEQM) and 438 to 470 (LPTF…QQGL). The disordered stretch occupies residues 488–520 (LGALGSTGGSSGTNGSNATPSENTSPTAGTTEP). Residues 489–499 (GALGSTGGSSG) show a composition bias toward gly residues. Positions 509 to 520 (ENTSPTAGTTEP) are enriched in polar residues. One can recognise a UBA domain in the interval 546 to 586 (RFQQQLEQLSAMGFLNREANLQALIATGGDINAAIERLLGS).

As to quaternary structure, monomer and homodimer. Heterodimer with UBQLN2. Binds CD47, NBL1, GABRA1, GABRA2, GABRA3, GABRA6, GABRB1, GABRB2 and GABRB3. Binds UBE3A, BTRC, P4HB and MTOR. Interacts with the proteasome 19S subunit. Interacts (via ubiquitin-like domain) with TREX1; the interaction is direct and may control TREX1 subcellular location. Forms a complex with UBXN4 and VCP. Interacts (via UBA domain) with UBQLN4 (via ubiquitin-like domain). Found in a complex with UBQLN2 and MAP1LC3A/B/C. The monomeric form interacts with PSEN2. The monomeric form interacts with PSEN1. Interacts with ORAI1. Interacts (via UBA domain) with TICAM1. Interacts with EPS15. Interacts (via UBA domain) with UBA52 and (via ubiquitin-like domain) with PSMD3 and PSMD4. Interacts with HERPUD1. Interacts with MAP1LC3A/B/C in the presence of UBQLN4. Interacts (via ubiquitin-like domain) with EPS15 (via UIM domains) and both the ubiquitinated and non-ubiquitinated forms can interact with EPS15. Interacts (via ubiquitin-like domain) with EPS15L1, HGS (via UIM domain) and STAM2 (via UIM domain). Interacts with BCL2L10/BCL-B; in the cytoplasm. In terms of assembly, monomeric form interacts with PSEN1. Degraded during both macroautophagy and during chaperone-mediated autophagy (CMA). Post-translationally, phosphorylated. In terms of processing, ubiquitinated. In terms of tissue distribution, brain (at protein level). Ubiquitous. Highly expressed throughout the brain; detected in neurons and in neuropathological lesions, such as neurofibrillary tangles and Lewy bodies. Highly expressed in heart, placenta, pancreas, lung, liver, skeletal muscle and kidney.

It is found in the cytoplasm. The protein localises to the nucleus. Its subcellular location is the endoplasmic reticulum. The protein resides in the cytoplasmic vesicle. It localises to the autophagosome. It is found in the cell membrane. Plays an important role in the regulation of different protein degradation mechanisms and pathways including ubiquitin-proteasome system (UPS), autophagy and endoplasmic reticulum-associated protein degradation (ERAD) pathway. Mediates the proteasomal targeting of misfolded or accumulated proteins for degradation by binding (via UBA domain) to their polyubiquitin chains and by interacting (via ubiquitin-like domain) with the subunits of the proteasome. Plays a role in the ERAD pathway via its interaction with ER-localized proteins UBXN4, VCP and HERPUD1 and may form a link between the polyubiquitinated ERAD substrates and the proteasome. Involved in the regulation of macroautophagy and autophagosome formation; required for maturation of autophagy-related protein LC3 from the cytosolic form LC3-I to the membrane-bound form LC3-II and may assist in the maturation of autophagosomes to autolysosomes by mediating autophagosome-lysosome fusion. Negatively regulates the TICAM1/TRIF-dependent toll-like receptor signaling pathway by decreasing the abundance of TICAM1 via the autophagic pathway. Promotes the ubiquitination and lysosomal degradation of ORAI1, consequently down-regulating the ORAI1-mediated Ca2+ mobilization. Suppresses the maturation and proteasomal degradation of amyloid beta A4 protein (A4) by stimulating the lysine 63 (K63)-linked polyubiquitination. Delays the maturation of A4 by sequestering it in the Golgi apparatus and preventing its transport to the cell surface for subsequent processing. Ubiquitinates BCL2L10 and thereby stabilizes protein abundance. Functionally, plays a role in unfolded protein response (UPR) by attenuating the induction of UPR-inducible genes, DDTI3/CHOP, HSPA5 and PDIA2 during ER stress. Plays a key role in the regulation of the levels of PSEN1 by targeting its accumulation to aggresomes which may then be removed from cells by autophagocytosis. Its function is as follows. Plays a role in unfolded protein response (UPR) by attenuating the induction of UPR-inducible genes, DDTI3/CHOP, HSPA5 and PDIA2 during ER stress. This Homo sapiens (Human) protein is Ubiquilin-1 (UBQLN1).